Consider the following 4814-residue polypeptide: Nonribosomal peptide synthetase SIDC (4814 aa).

The adenylation 1 stretch occupies residues P21–A453. In terms of domain architecture, Carrier 1 spans D528–D601. O-(pantetheine 4'-phosphoryl)serine is present on S562. The segment at V637–E1045 is condensation 1. Positions T1101–V1488 are adenylation 2. Carrier domains are found at residues E1589–H1666 and S2134–G2210. O-(pantetheine 4'-phosphoryl)serine is present on residues S1626 and S2171. Condensation regions lie at residues L1706–G2210 and L2243–D2649. The interval T2709–V3100 is adenylation 3. The Carrier 4 domain maps to S3203–S3280. S3240 is subject to O-(pantetheine 4'-phosphoryl)serine. Residues Y3319–A3732 form a condensation 4 region. In terms of domain architecture, Carrier 5 spans E3747 to T3823. At S3784 the chain carries O-(pantetheine 4'-phosphoryl)serine. Positions D3857–V4258 are condensation 5. One can recognise a Carrier 6 domain in the interval N4295–G4368. Position 4329 is an O-(pantetheine 4'-phosphoryl)serine (S4329). The interval E4504–D4686 is condensation 6.

It belongs to the NRP synthetase family. The cofactor is pantetheine 4'-phosphate.

The protein operates within siderophore biosynthesis. In terms of biological role, nonribosomal peptide synthetase; part of the gene cluster that mediates the biosynthesis of at least 11 siderophores, including beauverichelin A, dimerumic acid (DA), Na-dimethyl coprogen (NADC), eleutherazine B, ferricrocin (FC), fusarinine A, fusarinine C (FsC), metachelin A, mevalonolactone, rhodotorulic acid (RA) and tenellin. This cocktail of siderophores for iron metabolism is essential for virulence, and more specifically for the fungal virulence in penetrating through the host cuticle. Siderophore synthesis is also involved in conidial germination under iron-deficient conditions. SIDC catalyzes the assembly of ferricrocin whereas SIDD catalyzes the assembly of fusarinine C. The polypeptide is Nonribosomal peptide synthetase SIDC (Beauveria bassiana (strain ARSEF 2860) (White muscardine disease fungus)).